A 393-amino-acid polypeptide reads, in one-letter code: Staphopain B (393 aa).

An N-terminal signal peptide occupies residues 1–36 (MNSSCKTRVFNIISIIMVSMLILSLGAFANNNKAKA). The propeptide occupies 37–219 (DSHSKQLEIN…KVEENEAIQE (183 aa)). Residues C243, H340, and N360 contribute to the active site.

The protein belongs to the peptidase C47 family. In the cytoplasm, prematurely activated/folded SspB forms a stable non-covalent complex with SspC. Post-translationally, proteolytically cleaved by staphylococcal serine protease (SspA).

The protein localises to the secreted. With respect to regulation, prematurely activated/folded staphopain B is inhibited by staphostatin B (SspC), which is probably required to protect staphylococcal cytoplasmic proteins from degradation by SspB. Functionally, cysteine protease that plays an important role in the inhibition of host innate immune response. Degrades host elastin, fibrogen, fibronectin and kininogen. Blocks phagocytosis of opsonised S.aureus by neutrophils and monocytes by inducing their death in a proteolytic activity-dependent manner. Decreases surface expression of the 'don't eat me' signal CD31 on neutrophils. Cleaves host galectin-3/LGALS3, thereby inhibiting the neutrophil-activating ability of the lectin. In Staphylococcus aureus, this protein is Staphopain B (sspB).